Consider the following 350-residue polypeptide: Biotin synthase (350 aa).

One can recognise a Radical SAM core domain in the interval 38-256 (NHVQVSTLLS…IAIARIMMPQ (219 aa)). Positions 53, 57, and 60 each coordinate [4Fe-4S] cluster. The [2Fe-2S] cluster site is built by cysteine 97, cysteine 128, cysteine 188, and arginine 260.

The protein belongs to the radical SAM superfamily. Biotin synthase family. As to quaternary structure, homodimer. The cofactor is [4Fe-4S] cluster. [2Fe-2S] cluster is required as a cofactor.

The catalysed reaction is (4R,5S)-dethiobiotin + (sulfur carrier)-SH + 2 reduced [2Fe-2S]-[ferredoxin] + 2 S-adenosyl-L-methionine = (sulfur carrier)-H + biotin + 2 5'-deoxyadenosine + 2 L-methionine + 2 oxidized [2Fe-2S]-[ferredoxin]. It functions in the pathway cofactor biosynthesis; biotin biosynthesis; biotin from 7,8-diaminononanoate: step 2/2. Catalyzes the conversion of dethiobiotin (DTB) to biotin by the insertion of a sulfur atom into dethiobiotin via a radical-based mechanism. This Vibrio parahaemolyticus serotype O3:K6 (strain RIMD 2210633) protein is Biotin synthase.